We begin with the raw amino-acid sequence, 156 residues long: Hexachlorocyclohexane dehydrochlorinase 2 (156 aa).

Asp-25 is a catalytic residue. The active-site Proton acceptor is His-73.

This sequence belongs to the HCH dehydrochlorinase family. Homotrimer.

The protein resides in the periplasm. The catalysed reaction is gamma-hexachlorocyclohexane = (3R,4S,5S,6R)-pentachlorocyclohexene + chloride + H(+). It catalyses the reaction (3R,4S,5S,6R)-pentachlorocyclohexene = (3R,6R)-1,3,4,6-tetrachlorocyclohexa-1,4-diene + chloride + H(+). It functions in the pathway xenobiotic degradation; hexachlorocyclohexane degradation. Catalyzes the conversion of the important environmental pollutant gamma-hexachlorocyclohexane (gamma-HCH or lindane) to 1,3,4,6-tetrachloro-1,4-cyclohexadiene (1,4-TCDN) via gamma-pentachlorocyclohexene (gamma-PCCH). Proceeds by two successive 1,2-anti conformationally dependent dehydrochlorinations. Also shows activity with alpha- and delta-HCH, giving alpha- and delta-PCCH respectively, but not with the beta isomer. The chain is Hexachlorocyclohexane dehydrochlorinase 2 from Sphingobium indicum (strain DSM 16412 / CCM 7286 / MTCC 6364 / B90A).